The primary structure comprises 223 residues: ATP phosphoribosyltransferase (223 aa).

It belongs to the ATP phosphoribosyltransferase family. Short subfamily. As to quaternary structure, heteromultimer composed of HisG and HisZ subunits.

It localises to the cytoplasm. It carries out the reaction 1-(5-phospho-beta-D-ribosyl)-ATP + diphosphate = 5-phospho-alpha-D-ribose 1-diphosphate + ATP. Its pathway is amino-acid biosynthesis; L-histidine biosynthesis; L-histidine from 5-phospho-alpha-D-ribose 1-diphosphate: step 1/9. Catalyzes the condensation of ATP and 5-phosphoribose 1-diphosphate to form N'-(5'-phosphoribosyl)-ATP (PR-ATP). Has a crucial role in the pathway because the rate of histidine biosynthesis seems to be controlled primarily by regulation of HisG enzymatic activity. This is ATP phosphoribosyltransferase from Bordetella bronchiseptica (strain ATCC BAA-588 / NCTC 13252 / RB50) (Alcaligenes bronchisepticus).